Consider the following 1140-residue polypeptide: Multiple epidermal growth factor-like domains protein 10 (1140 aa).

The N-terminal stretch at 1 to 25 (MVISLNSCLSFICLLLCHWIGTASP) is a signal peptide. Residues 1-857 (MVISLNSCLS…ALPADSYQIG (857 aa)) are necessary for interaction with AP2M1, self-assembly and formation of the irregular, mosaic-like adhesion pattern. The Extracellular segment spans residues 26 to 857 (LNLEDPNVCS…ALPADSYQIG (832 aa)). Residues 30–107 (DPNVCSHWES…FYESGEMCVP (78 aa)) form the EMI domain. 48 cysteine pairs are disulfide-bonded: Cys34-Cys95, Cys60-Cys69, Cys94-Cys105, Cys109-Cys118, Cys113-Cys124, Cys126-Cys135, Cys148-Cys160, Cys154-Cys167, Cys169-Cys178, Cys191-Cys203, Cys197-Cys210, Cys212-Cys221, Cys234-Cys246, Cys240-Cys253, Cys255-Cys264, Cys281-Cys289, Cys283-Cys296, Cys298-Cys307, Cys320-Cys332, Cys326-Cys339, Cys341-Cys350, Cys409-Cys421, Cys415-Cys428, Cys430-Cys439, Cys456-Cys464, Cys458-Cys471, Cys473-Cys482, Cys495-Cys507, Cys501-Cys514, Cys516-Cys525, Cys542-Cys550, Cys544-Cys557, Cys559-Cys568, Cys581-Cys593, Cys587-Cys600, Cys602-Cys611, Cys669-Cys681, Cys675-Cys688, Cys690-Cys699, Cys716-Cys724, Cys718-Cys731, Cys733-Cys742, Cys755-Cys767, Cys761-Cys774, Cys776-Cys785, Cys802-Cys810, Cys804-Cys817, and Cys819-Cys828. 15 EGF-like domains span residues 106–136 (VPHC…TNCS), 144–179 (WGPH…WRCE), 187–222 (YGND…AFCE), 230–265 (HGPQ…TVCG), 278–308 (SQEC…ERCQ), 316–351 (YGVL…ERCE), 405–440 (YGEA…IDCS), 453–483 (SSRC…VDCS), 491–526 (WGFG…EKCE), 539–569 (AERC…VHCD), 577–612 (WGPN…TTCQ), 665–700 (FGKN…SDCS), 713–743 (IHTC…LYCT), 751–786 (YGKD…RHCE), and 799–829 (RQIC…ARCD). N-linked (GlcNAc...) asparagine glycosylation occurs at Asn134. Residue Asn496 is glycosylated (N-linked (GlcNAc...) asparagine). A helical membrane pass occupies residues 858–878 (AIAGIIILVLVVLFLLALFII). Residues 879 to 1140 (YRHKQKGKES…SSSNSSSSSE (262 aa)) are Cytoplasmic-facing. Residues 945–1140 (RDRMTVTKSK…SSSNSSSSSE (196 aa)) form a necessary for formation of large intracellular vacuoles region. A Phosphotyrosine; by SRC modification is found at Tyr1030. The segment at 1111-1140 (YDLLPVRDSSSSPKQEDSGGSSSNSSSSSE) is disordered. A compositionally biased stretch (low complexity) spans 1128-1140 (SGGSSSNSSSSSE).

This sequence belongs to the MEGF family. In terms of assembly, homomer. Interacts with GULP1 and ABCA1. Interacts with AP2M1. Does not interact with MEGF11. Binds with high affinity to complement C1q. Interacts (via the cytoplasmic domain) with NOTCH1 (via NICD domain). Phosphorylated on tyrosine residues. Phosphorylation at Tyr-1030 may be important for muscle cell proliferation. Post-translationally, ubiquitinated; mono- and polyubiquitinated forms are detected. In terms of tissue distribution, expressed in muscle (at protein level).

Its subcellular location is the cell membrane. The protein localises to the cell projection. The protein resides in the phagocytic cup. Its function is as follows. Membrane receptor involved in phagocytosis by macrophages and astrocytes of apoptotic cells. Receptor for C1q, an eat-me signal, that binds phosphatidylserine expressed on the surface of apoptotic cells. Cooperates with ABCA1 within the process of engulfment. Promotes the formation of large intracellular vacuoles and may be responsible for the uptake of amyloid-beta peptides. Necessary for astrocyte-dependent apoptotic neuron clearance in the developing cerebellum. Plays role in muscle cell proliferation, adhesion and motility. Is also an essential factor in the regulation of myogenesis. Controls the balance between skeletal muscle satellite cells proliferation and differentiation through regulation of the notch signaling pathway. May also function in the mosaic spacing of specific neuron subtypes in the retina through homotypic retinal neuron repulsion. Mosaics provide a mechanism to distribute each cell type evenly across the retina, ensuring that all parts of the visual field have access to a full set of processing elements. The chain is Multiple epidermal growth factor-like domains protein 10 from Homo sapiens (Human).